Here is a 190-residue protein sequence, read N- to C-terminus: Small ribosomal subunit protein eS7 (190 aa).

Belongs to the eukaryotic ribosomal protein eS7 family.

The protein is Small ribosomal subunit protein eS7 (RpS7) of Manduca sexta (Tobacco hawkmoth).